Consider the following 339-residue polypeptide: Small ribosomal subunit biogenesis GTPase RsgA (339 aa).

Residues 111–271 (MRGLLKPVAA…LIDSPGIREF (161 aa)) enclose the CP-type G domain. Residues 159 to 162 (NKAD) and 213 to 221 (GQSGVGKSS) contribute to the GTP site. The Zn(2+) site is built by C295, C300, H302, and C308.

The protein belongs to the TRAFAC class YlqF/YawG GTPase family. RsgA subfamily. In terms of assembly, monomer. Associates with 30S ribosomal subunit, binds 16S rRNA. Zn(2+) serves as cofactor.

It localises to the cytoplasm. Its function is as follows. One of several proteins that assist in the late maturation steps of the functional core of the 30S ribosomal subunit. Helps release RbfA from mature subunits. May play a role in the assembly of ribosomal proteins into the subunit. Circularly permuted GTPase that catalyzes slow GTP hydrolysis, GTPase activity is stimulated by the 30S ribosomal subunit. The sequence is that of Small ribosomal subunit biogenesis GTPase RsgA from Pseudomonas aeruginosa (strain UCBPP-PA14).